Reading from the N-terminus, the 514-residue chain is Peptide chain release factor 3 (514 aa).

The tr-type G domain occupies 8 to 268; the sequence is KKRRTFAIIS…TFLEFAPEPH (261 aa). GTP contacts are provided by residues 17–24, 85–89, and 139–142; these read SHPDAGKT, DTPGH, and NKLD.

It belongs to the TRAFAC class translation factor GTPase superfamily. Classic translation factor GTPase family. PrfC subfamily.

Its subcellular location is the cytoplasm. In terms of biological role, increases the formation of ribosomal termination complexes and stimulates activities of RF-1 and RF-2. It binds guanine nucleotides and has strong preference for UGA stop codons. It may interact directly with the ribosome. The stimulation of RF-1 and RF-2 is significantly reduced by GTP and GDP, but not by GMP. This is Peptide chain release factor 3 from Streptococcus pyogenes serotype M28 (strain MGAS6180).